A 346-amino-acid polypeptide reads, in one-letter code: Fe(3+) ions import ATP-binding protein FbpC 3 (346 aa).

Positions 5–235 (LEVDGVDKSF…PIDVATAEFI (231 aa)) constitute an ABC transporter domain. Position 37 to 44 (37 to 44 (GPSGCGKT)) interacts with ATP.

Belongs to the ABC transporter superfamily. Fe(3+) ion importer (TC 3.A.1.10) family. As to quaternary structure, the complex is composed of two ATP-binding proteins (FbpC), two transmembrane proteins (FbpB) and a solute-binding protein (FbpA).

It is found in the cell membrane. It carries out the reaction Fe(3+)(out) + ATP + H2O = Fe(3+)(in) + ADP + phosphate + H(+). In terms of biological role, part of the ABC transporter complex FbpABC involved in Fe(3+) ions import. Responsible for energy coupling to the transport system. The chain is Fe(3+) ions import ATP-binding protein FbpC 3 from Rhodococcus jostii (strain RHA1).